A 501-amino-acid polypeptide reads, in one-letter code: Endonuclease domain-containing 1 protein (501 aa).

The N-terminal stretch at 1 to 21 (MGCARWLALGGLLALAGLLQA) is a signal peptide. At lysine 408 the chain carries N6-acetyllysine.

This sequence belongs to the DNA/RNA non-specific endonuclease family. As to quaternary structure, interacts with RNF26; this interaction is important to modulate innate immune signaling through the cGAS-STING pathway.

It is found in the secreted. Its function is as follows. May act as a DNase and a RNase. Plays a role in the modulation of innate immune signaling through the cGAS-STING pathway by interacting with RNF26. The protein is Endonuclease domain-containing 1 protein (Endod1) of Mus musculus (Mouse).